The sequence spans 335 residues: GTPase Obg (335 aa).

The Obg domain maps to 1–158 (MFVDQITLEL…RQVELELKLI (158 aa)). Residues 126 to 145 (NTFFKTSVNRAPTKATPGKP) form a disordered region. In terms of domain architecture, OBG-type G spans 159-334 (ADIGLVGFPN…LYRFFTQRLA (176 aa)). GTP is bound by residues 165 to 172 (GFPNAGKS), 190 to 194 (FTTLA), 215 to 218 (DIPG), 285 to 288 (NKID), and 315 to 317 (SGL). The Mg(2+) site is built by Ser-172 and Thr-192.

This sequence belongs to the TRAFAC class OBG-HflX-like GTPase superfamily. OBG GTPase family. Monomer. The cofactor is Mg(2+).

The protein resides in the cytoplasm. In terms of biological role, an essential GTPase which binds GTP, GDP and possibly (p)ppGpp with moderate affinity, with high nucleotide exchange rates and a fairly low GTP hydrolysis rate. Plays a role in control of the cell cycle, stress response, ribosome biogenesis and in those bacteria that undergo differentiation, in morphogenesis control. This chain is GTPase Obg, found in Chlamydia pneumoniae (Chlamydophila pneumoniae).